An 87-amino-acid polypeptide reads, in one-letter code: Large ribosomal subunit protein bL27 (87 aa).

The protein belongs to the bacterial ribosomal protein bL27 family.

The chain is Large ribosomal subunit protein bL27 from Wigglesworthia glossinidia brevipalpis.